The chain runs to 84 residues: Large ribosomal subunit protein bL31 (84 aa).

Residues Cys16, Cys18, Cys38, and Cys41 each contribute to the Zn(2+) site.

It belongs to the bacterial ribosomal protein bL31 family. Type A subfamily. As to quaternary structure, part of the 50S ribosomal subunit. Requires Zn(2+) as cofactor.

In terms of biological role, binds the 23S rRNA. This chain is Large ribosomal subunit protein bL31, found in Mycobacterium leprae (strain Br4923).